Reading from the N-terminus, the 153-residue chain is MTGIFCIFMWYLLLILYMGQIKGVFGTYEPITYKTGCSLWGIFFIISGISIIRATWYPSQRQLTCAMLENILCMILAIISMILTIVELSTFKSVSYRNYGQAKLGRQISRVLLSFYPLEVSMALTYSIFGCVGLCRKKEDARTADTEEVEDAF.

4 helical membrane-spanning segments follow: residues 1-21, 36-56, 71-91, and 111-131; these read MTGI…MGQI, GCSL…RATW, ILCM…LSTF, and VLLS…IFGC.

It belongs to the MS4A family.

The protein resides in the membrane. May be involved in signal transduction as a component of a multimeric receptor complex. The chain is Membrane-spanning 4-domains subfamily A member 13 (MS4A13) from Bos taurus (Bovine).